The primary structure comprises 194 residues: Phosphoheptose isomerase (194 aa).

The SIS domain maps to 37–194 (ISNSFKQGGK…LIEFEMAKQA (158 aa)). 52 to 54 (NGG) is a substrate binding site. The Zn(2+) site is built by histidine 61 and glutamate 65. Substrate-binding positions include glutamate 65, 93–94 (ND), 119–121 (STS), serine 124, and glutamine 172. 2 residues coordinate Zn(2+): glutamine 172 and histidine 180.

Belongs to the SIS family. GmhA subfamily. As to quaternary structure, homotetramer. Zn(2+) is required as a cofactor.

It is found in the cytoplasm. It catalyses the reaction 2 D-sedoheptulose 7-phosphate = D-glycero-alpha-D-manno-heptose 7-phosphate + D-glycero-beta-D-manno-heptose 7-phosphate. It participates in carbohydrate biosynthesis; D-glycero-D-manno-heptose 7-phosphate biosynthesis; D-glycero-alpha-D-manno-heptose 7-phosphate and D-glycero-beta-D-manno-heptose 7-phosphate from sedoheptulose 7-phosphate: step 1/1. Functionally, catalyzes the isomerization of sedoheptulose 7-phosphate in D-glycero-D-manno-heptose 7-phosphate. In Haemophilus influenzae (strain PittEE), this protein is Phosphoheptose isomerase.